Reading from the N-terminus, the 141-residue chain is Large ribosomal subunit protein uL11 (141 aa).

It belongs to the universal ribosomal protein uL11 family. As to quaternary structure, part of the ribosomal stalk of the 50S ribosomal subunit. Interacts with L10 and the large rRNA to form the base of the stalk. L10 forms an elongated spine to which L12 dimers bind in a sequential fashion forming a multimeric L10(L12)X complex. One or more lysine residues are methylated.

In terms of biological role, forms part of the ribosomal stalk which helps the ribosome interact with GTP-bound translation factors. This Streptococcus equi subsp. equi (strain 4047) protein is Large ribosomal subunit protein uL11.